A 438-amino-acid chain; its full sequence is uncharacterized protein (438 aa).

Lys273 carries the N6-(pyridoxal phosphate)lysine modification.

Belongs to the class-III pyridoxal-phosphate-dependent aminotransferase family. Pyridoxal 5'-phosphate serves as cofactor.

It localises to the mitochondrion. This is an uncharacterized protein from Schizosaccharomyces pombe (strain 972 / ATCC 24843) (Fission yeast).